A 299-amino-acid polypeptide reads, in one-letter code: Putative cuticle collagen 155 (299 aa).

Residues 1 to 27 (MEFEQRIKAYRFVAYSAVAFSVVAVLS) form the signal peptide. Triple-helical region stretches follow at residues 103–132 (GAAGPAGTPGKPGRPGKPGAPGLPGNPGHP), 151–177 (GPPGPPGPPGPSGDAGGNGNPGSPGQD), 181–202 (GAPGNKGPSGPNGNPGAPGAPG), and 216–278 (GAPG…VGEK). The disordered stretch occupies residues 107–278 (PAGTPGKPGR…SGTPGGVGEK (172 aa)). Over residues 129 to 161 (PGHPPQQPCDPITPPPCQPCPQGPPGPPGPPGP) the composition is skewed to pro residues. A compositionally biased stretch (gly residues) spans 163 to 172 (GDAGGNGNPG). Over residues 173 to 197 (SPGQDGQPGAPGNKGPSGPNGNPGA) the composition is skewed to low complexity. The span at 215–233 (PGAPGPQGTPGPQGPPGQP) shows a compositional bias: pro residues. Positions 250 to 268 (PNGNPGQPGADGNPGAPGQ) are enriched in low complexity.

The protein belongs to the cuticular collagen family. In terms of assembly, collagen polypeptide chains are complexed within the cuticle by disulfide bonds and other types of covalent cross-links.

In terms of biological role, nematode cuticles are composed largely of collagen-like proteins. The cuticle functions both as an exoskeleton and as a barrier to protect the worm from its environment. This Caenorhabditis elegans protein is Putative cuticle collagen 155 (col-155).